Here is a 164-residue protein sequence, read N- to C-terminus: CB1 cannabinoid receptor-interacting protein 1 (164 aa).

It belongs to the CNRIP family. In terms of assembly, interacts with the cannabinoid receptor CNR1 (via C-terminus). Does not interact with cannabinoid receptor CNR2.

In terms of biological role, suppresses cannabinoid receptor CNR1-mediated tonic inhibition of voltage-gated calcium channels. The chain is CB1 cannabinoid receptor-interacting protein 1 (Cnrip1) from Rattus norvegicus (Rat).